A 180-amino-acid polypeptide reads, in one-letter code: Inorganic pyrophosphatase (180 aa).

Positions 28, 42, and 54 each coordinate substrate. Positions 66, 71, and 102 each coordinate Mg(2+). Tyr-139 contacts substrate.

The protein belongs to the PPase family. As to quaternary structure, homohexamer. Mg(2+) is required as a cofactor.

The protein resides in the cytoplasm. It catalyses the reaction diphosphate + H2O = 2 phosphate + H(+). In terms of biological role, hydrolyzes PPi generated in anabolic reactions. Functionally, catalyzes the hydrolysis of inorganic pyrophosphate (PPi) forming two phosphate ions. The protein is Inorganic pyrophosphatase of Pseudanabaena sp. (strain PCC 6903).